We begin with the raw amino-acid sequence, 481 residues long: Ribosomal protein uS12 methylthiotransferase RimO (481 aa).

Residues 8-124 (MTVHLVSMGC…IAGRLRTILD (117 aa)) form the MTTase N-terminal domain. 3 residues coordinate [4Fe-4S] cluster: C17, C53, and C87. The interval 148–188 (PTARAEVSVPGHGTAPDLSASVTPDSGPRATRRRLGTGPSA) is disordered. Residues 182–413 (LGTGPSAPLK…DLTDELVSQR (232 aa)) enclose the Radical SAM core domain. Positions 196, 200, and 203 each coordinate [4Fe-4S] cluster. In terms of domain architecture, TRAM spans 415–480 (EDRIGTRGRV…GVDLVARPAN (66 aa)).

This sequence belongs to the methylthiotransferase family. RimO subfamily. Requires [4Fe-4S] cluster as cofactor.

It is found in the cytoplasm. The enzyme catalyses L-aspartate(89)-[ribosomal protein uS12]-hydrogen + (sulfur carrier)-SH + AH2 + 2 S-adenosyl-L-methionine = 3-methylsulfanyl-L-aspartate(89)-[ribosomal protein uS12]-hydrogen + (sulfur carrier)-H + 5'-deoxyadenosine + L-methionine + A + S-adenosyl-L-homocysteine + 2 H(+). In terms of biological role, catalyzes the methylthiolation of an aspartic acid residue of ribosomal protein uS12. The sequence is that of Ribosomal protein uS12 methylthiotransferase RimO from Cutibacterium acnes (strain DSM 16379 / KPA171202) (Propionibacterium acnes).